We begin with the raw amino-acid sequence, 102 residues long: Small ribosomal subunit protein bS18c (102 aa).

Belongs to the bacterial ribosomal protein bS18 family. As to quaternary structure, part of the 30S ribosomal subunit.

Its subcellular location is the plastid. The protein resides in the chloroplast. This is Small ribosomal subunit protein bS18c from Phaseolus vulgaris (Kidney bean).